A 363-amino-acid polypeptide reads, in one-letter code: Probable aminomethyltransferase (363 aa).

This sequence belongs to the GcvT family. In terms of assembly, the glycine cleavage system is composed of four proteins: P, T, L and H.

It carries out the reaction N(6)-[(R)-S(8)-aminomethyldihydrolipoyl]-L-lysyl-[protein] + (6S)-5,6,7,8-tetrahydrofolate = N(6)-[(R)-dihydrolipoyl]-L-lysyl-[protein] + (6R)-5,10-methylene-5,6,7,8-tetrahydrofolate + NH4(+). Its function is as follows. The glycine cleavage system catalyzes the degradation of glycine. This chain is Probable aminomethyltransferase, found in Halobacterium salinarum (strain ATCC 29341 / DSM 671 / R1).